Reading from the N-terminus, the 795-residue chain is Toll-like receptor 6 (795 aa).

The first 27 residues, 1 to 27 (MSQDRKPIVGSFHFVCALALIVGSMTP), serve as a signal peptide directing secretion. Over 28-584 (FSNELESMVD…FHMSPLSCDT (557 aa)) the chain is Extracellular. N-linked (GlcNAc...) asparagine glycosylation is present at Asn-42. LRR repeat units lie at residues 54–77 (TKAL…FLSE), 78–101 (LRVL…FNQD), 102–125 (LEYL…SLRH), 126–150 (LDLS…KLTF), 151–175 (LGLS…SCIL), 176–199 (LDLV…TTVL), 200–223 (HLVF…LGHL), 224–250 (QLSN…RGPT), 251–278 (LLNV…PRPV), 279–308 (EYLN…KSLM), 309–337 (IEHV…KMLS), 338–361 (ISDT…LNFT), 362–388 (QNVF…QRNG), 389–414 (LKNF…SLNS), 415–437 (LNSH…NLSS), 438–457 (NMLT…VLDL), 458–478 (HNNR…LQEL), 479–500 (NVAS…LSVL), and 501–524 (VIDH…IRSL). An N-linked (GlcNAc...) asparagine glycan is attached at Asn-114. Residues Cys-117 and Cys-139 are joined by a disulfide bond. Asn-144 carries an N-linked (GlcNAc...) asparagine glycan. N-linked (GlcNAc...) asparagine glycosylation is found at Asn-195 and Asn-214. An intrachain disulfide couples Cys-235 to Cys-265. Residues Asn-253 and Asn-285 are each glycosylated (N-linked (GlcNAc...) asparagine). Cys-348 and Cys-373 are oxidised to a cystine. Asn-359 carries N-linked (GlcNAc...) asparagine glycosylation. 2 N-linked (GlcNAc...) asparagine glycosylation sites follow: Asn-401 and Asn-434. Cys-424 and Cys-447 form a disulfide bridge. The LRRCT domain occupies 525–576 (TAGNNPFQCTCELRDFVKNIGWVAREVVEGWPDSYRCDYPESSKGTALRDFH). Residues 585–605 (VLLTVTIGATMLVLAVTGAFL) form a helical membrane-spanning segment. The Cytoplasmic segment spans residues 606 to 795 (CLYFDLPWYV…ALVNEDDVKT (190 aa)). The TIR domain occupies 640 to 781 (LQFHAFVSYS…LFWANLRASF (142 aa)).

The protein belongs to the Toll-like receptor family. As to quaternary structure, homodimer (via cytoplasmic TIR domain). Heterodimer with TLR2 via their respective extracellular domains. Binds MYD88 via their respective TIR domains. Interacts with CD36, following CD36 stimulation by oxLDL or amyloid-beta 42, and forms a heterodimer with TLR4. The trimeric complex is internalized and triggers inflammatory response. LYN kinase activity facilitates TLR4:TLR6 heterodimerization and signal initiation. The heterodimer TLR2:TLR6 interacts with CD14 and CD36 in response to triacylated lipopeptides. In terms of tissue distribution, detected in thymus, spleen, ovary and lung. Expressed in macrohpages.

It localises to the cell membrane. Its subcellular location is the cytoplasmic vesicle. It is found in the phagosome membrane. The protein localises to the membrane raft. The protein resides in the golgi apparatus. Functionally, participates in the innate immune response to Gram-positive bacteria and fungi. Specifically recognizes diacylated and, to a lesser extent, triacylated lipopeptides. In response to diacylated lipopeptides, forms the activation cluster TLR2:TLR6:CD14:CD36, this cluster triggers signaling from the cell surface and subsequently is targeted to the Golgi in a lipid-raft dependent pathway. Acts via MYD88 and TRAF6, leading to NF-kappa-B activation, cytokine secretion and the inflammatory response. Recognizes mycoplasmal macrophage-activating lipopeptide-2kD (MALP-2), soluble tuberculosis factor (STF), phenol-soluble modulin (PSM) and B.burgdorferi outer surface protein A lipoprotein (OspA-L) cooperatively with TLR2. In complex with TLR4, promotes sterile inflammation in monocytes/macrophages in response to oxidized low-density lipoprotein (oxLDL) or amyloid-beta 42. In this context, the initial signal is provided by oxLDL- or amyloid-beta 42-binding to CD36. This event induces the formation of a heterodimer of TLR4 and TLR6, which is rapidly internalized and triggers inflammatory response, leading to the NF-kappa-B-dependent production of CXCL1, CXCL2 and CCL9 cytokines, via MYD88 signaling pathway, and CCL5 cytokine, via TICAM1 signaling pathway, as well as IL1B secretion. This Mus musculus (Mouse) protein is Toll-like receptor 6 (Tlr6).